A 756-amino-acid chain; its full sequence is U3 small nucleolar RNA-associated protein 25 homolog (756 aa).

A disordered region spans residues 1–159 (MGKRGSRSQS…SQTSPEEFTD (159 aa)). Promotes p53/TP53 degradation regions lie at residues 1-185 (MGKR…SLKA) and 573-635 (VQLP…KKEE). S10 bears the Phosphoserine mark. The segment covering 25 to 43 (RDFGEEHPFYDRVSRKEAK) has biased composition (basic and acidic residues). S50, S52, S58, S60, S62, and S64 each carry phosphoserine. Composition is skewed to acidic residues over residues 54–64 (DSSDSESDSES) and 84–121 (EEEE…EEMA). Residues 636-697 (LNFTHICEYT…YELPTYPHFY (62 aa)) are represses p53/TP53 degradation.

The protein belongs to the UTP25 family. As to quaternary structure, interacts with CAPN3; the interaction is required for CAPN3 translocation to the nucleolus. Phosphorylated. Phosphorylation is required to promote p53/TP53 degradation in the nucleolus which promotes cell cycle progression and liver development. As to expression, expressed in colon.

The protein resides in the nucleus. Its subcellular location is the nucleolus. In terms of biological role, component of the ribosomal small subunit processome for the biogenesis of ribosomes, functions in pre-ribosomal RNA (pre-rRNA) processing. Essential for embryonic development in part through the regulation of p53 pathway. Controls the expansion growth of digestive organs and liver. Also involved in the sympathetic neuronal development. Mediates, with CAPN3, the proteasome-independent degradation of p53/TP53. The protein is U3 small nucleolar RNA-associated protein 25 homolog of Homo sapiens (Human).